Reading from the N-terminus, the 381-residue chain is Homoserine O-succinyltransferase (381 aa).

One can recognise an AB hydrolase-1 domain in the interval 45 to 360; it reads NAVLVCHALN…PHGHDAFLLD (316 aa). Ser151 acts as the Nucleophile in catalysis. Arg221 contributes to the substrate binding site. Active-site residues include Asp321 and His354. Residue Asp355 participates in substrate binding.

Belongs to the AB hydrolase superfamily. MetX family. Homodimer.

Its subcellular location is the cytoplasm. The catalysed reaction is L-homoserine + succinyl-CoA = O-succinyl-L-homoserine + CoA. The protein operates within amino-acid biosynthesis; L-methionine biosynthesis via de novo pathway; O-succinyl-L-homoserine from L-homoserine: step 1/1. Functionally, transfers a succinyl group from succinyl-CoA to L-homoserine, forming succinyl-L-homoserine. The protein is Homoserine O-succinyltransferase of Burkholderia pseudomallei (strain 1710b).